We begin with the raw amino-acid sequence, 302 residues long: NmrA-like family domain-containing protein DDB_G0286605 (302 aa).

NADP(+)-binding positions include G9–Q14, R35–S39, D56–E57, T78–S80, K130, and Y157–N160.

Belongs to the NmrA-type oxidoreductase family.

Functionally, may be a redox sensor protein. This is NmrA-like family domain-containing protein DDB_G0286605 from Dictyostelium discoideum (Social amoeba).